The following is a 358-amino-acid chain: Protein FAM187B (358 aa).

Positions 1–17 (MLATLWLVGLSLPMLWA) are cleaved as a signal peptide. At 18-322 (QRLISCPYKN…DKADSVLRRL (305 aa)) the chain is on the extracellular side. N127 is a glycosylation site (N-linked (GlcNAc...) asparagine). Residues 323–343 (KLMVLSISVLAVGGLLCKVVF) traverse the membrane as a helical segment. The Cytoplasmic segment spans residues 344-358 (RPVCGKKRSQVLLVK).

Belongs to the FAM187 family.

The protein localises to the membrane. This Mus musculus (Mouse) protein is Protein FAM187B (Fam187b).